Here is a 298-residue protein sequence, read N- to C-terminus: tRNA U34 carboxymethyltransferase (298 aa).

Carboxy-S-adenosyl-L-methionine-binding positions include lysine 69, tryptophan 83, lysine 88, glycine 107, 129 to 131 (DPS), 156 to 157 (VE), tyrosine 176, and arginine 291.

Belongs to the class I-like SAM-binding methyltransferase superfamily. CmoB family. As to quaternary structure, homotetramer.

The catalysed reaction is carboxy-S-adenosyl-L-methionine + 5-hydroxyuridine(34) in tRNA = 5-carboxymethoxyuridine(34) in tRNA + S-adenosyl-L-homocysteine + H(+). Functionally, catalyzes carboxymethyl transfer from carboxy-S-adenosyl-L-methionine (Cx-SAM) to 5-hydroxyuridine (ho5U) to form 5-carboxymethoxyuridine (cmo5U) at position 34 in tRNAs. The sequence is that of tRNA U34 carboxymethyltransferase from Campylobacter curvus (strain 525.92).